The primary structure comprises 421 residues: C2 calcium-dependent domain-containing protein 4C (421 aa).

Disordered stretches follow at residues 13–97 (RGSG…AKLA), 119–140 (DWLSEEATDADPQAQGAMSLPS), 158–228 (HTRR…SPFG), and 250–303 (VSQL…TVHV). Residues 215–228 (ESDTGSSAESSPFG) are compositionally biased toward polar residues. S262, S264, and S273 each carry phosphoserine. The C2 domain maps to 305–421 (PRGSVRLLAE…LPLTSLLPFL (117 aa)).

It belongs to the C2CD4 family.

The protein is C2 calcium-dependent domain-containing protein 4C (C2CD4C) of Homo sapiens (Human).